Consider the following 234-residue polypeptide: Orotate phosphoribosyltransferase (234 aa).

K37 provides a ligand contact to 5-phospho-alpha-D-ribose 1-diphosphate. 45 to 46 (FF) contributes to the orotate binding site. 5-phospho-alpha-D-ribose 1-diphosphate contacts are provided by residues 83–84 (YK), R109, K110, K113, H115, and 134–142 (DDVISAGTS). Residues S138 and R166 each coordinate orotate.

Belongs to the purine/pyrimidine phosphoribosyltransferase family. PyrE subfamily. As to quaternary structure, homodimer. It depends on Mg(2+) as a cofactor.

The catalysed reaction is orotidine 5'-phosphate + diphosphate = orotate + 5-phospho-alpha-D-ribose 1-diphosphate. The protein operates within pyrimidine metabolism; UMP biosynthesis via de novo pathway; UMP from orotate: step 1/2. Catalyzes the transfer of a ribosyl phosphate group from 5-phosphoribose 1-diphosphate to orotate, leading to the formation of orotidine monophosphate (OMP). In Methylibium petroleiphilum (strain ATCC BAA-1232 / LMG 22953 / PM1), this protein is Orotate phosphoribosyltransferase.